The sequence spans 224 residues: Probable 2-phosphosulfolactate phosphatase (224 aa).

This sequence belongs to the ComB family. Mg(2+) is required as a cofactor.

It carries out the reaction (2R)-O-phospho-3-sulfolactate + H2O = (2R)-3-sulfolactate + phosphate. In Pseudothermotoga lettingae (strain ATCC BAA-301 / DSM 14385 / NBRC 107922 / TMO) (Thermotoga lettingae), this protein is Probable 2-phosphosulfolactate phosphatase.